The chain runs to 395 residues: N5-carboxyaminoimidazole ribonucleotide synthase (395 aa).

ATP contacts are provided by residues Lys-109, Lys-149, 184–187 (EEFI), Glu-192, and 268–269 (NE). Residues 113–298 (RQLLTRLGLP…QFEQQLRAIA (186 aa)) enclose the ATP-grasp domain.

The protein belongs to the PurK/PurT family. Homodimer.

The enzyme catalyses 5-amino-1-(5-phospho-beta-D-ribosyl)imidazole + hydrogencarbonate + ATP = 5-carboxyamino-1-(5-phospho-D-ribosyl)imidazole + ADP + phosphate + 2 H(+). It functions in the pathway purine metabolism; IMP biosynthesis via de novo pathway; 5-amino-1-(5-phospho-D-ribosyl)imidazole-4-carboxylate from 5-amino-1-(5-phospho-D-ribosyl)imidazole (N5-CAIR route): step 1/2. In terms of biological role, catalyzes the ATP-dependent conversion of 5-aminoimidazole ribonucleotide (AIR) and HCO(3)(-) to N5-carboxyaminoimidazole ribonucleotide (N5-CAIR). The chain is N5-carboxyaminoimidazole ribonucleotide synthase from Synechococcus elongatus (strain ATCC 33912 / PCC 7942 / FACHB-805) (Anacystis nidulans R2).